Consider the following 305-residue polypeptide: MSFTSDVKKELTRNLATTGALLALVRMNGSVGIFNGLTLSITTENAGTAKYIYQMLQELYEIHAEIRVHQKTTLSKNRVYTVFITEGAGELLDELSLADSLMLDNGVPEFVKNDEFIKKDYLRGAFLSAGALHNPEKGEYQLSIANVYQEHAEDLQEIFRDFGLNARVIERKNRWILYLSKAEEIMDFLTLIGAMKARLKFEEAKIMREMRGLANRQSNFENANIAKSVMAAQEAIDAIQFLNEKKELEQLPPSLKEIARLRLENPEATIKELGELLDPPLGKSGVNHRLRKLVERSNDLKKVES.

Residues 269 to 302 constitute a DNA-binding region (H-T-H motif); that stretch reads TIKELGELLDPPLGKSGVNHRLRKLVERSNDLKK.

This sequence belongs to the WhiA family.

Involved in cell division and chromosome segregation. The protein is Probable cell division protein WhiA of Lactococcus lactis subsp. cremoris (strain MG1363).